We begin with the raw amino-acid sequence, 444 residues long: tRNA pseudouridine synthase Pus10 (444 aa).

Asp265 (nucleophile) is an active-site residue. Tyr333 and Tyr405 together coordinate substrate.

The protein belongs to the pseudouridine synthase Pus10 family.

The enzyme catalyses uridine(54) in tRNA = pseudouridine(54) in tRNA. The catalysed reaction is uridine(55) in tRNA = pseudouridine(55) in tRNA. Its function is as follows. Responsible for synthesis of pseudouridine from uracil-54 and uracil-55 in the psi GC loop of transfer RNAs. The sequence is that of tRNA pseudouridine synthase Pus10 from Thermofilum pendens (strain DSM 2475 / Hrk 5).